The following is a 165-amino-acid chain: Cytochrome c-type biogenesis protein CcmE (165 aa).

Over 1-29 (MSATAEQNARNPKGKGGFARTVSQRKRKR) the chain is Cytoplasmic. Residues 30–50 (LFLIGGALAVLAVAVGLMLTA) form a helical; Signal-anchor for type II membrane protein membrane-spanning segment. Over 51 to 165 (FNQDIRFFRT…LKKKGVWEGK (115 aa)) the chain is Periplasmic. Heme contacts are provided by H143 and Y147.

It belongs to the CcmE/CycJ family.

The protein resides in the cell inner membrane. Its function is as follows. Heme chaperone required for the biogenesis of c-type cytochromes. Transiently binds heme delivered by CcmC and transfers the heme to apo-cytochromes in a process facilitated by CcmF and CcmH. In Brucella canis (strain ATCC 23365 / NCTC 10854 / RM-666), this protein is Cytochrome c-type biogenesis protein CcmE.